Reading from the N-terminus, the 205-residue chain is Holliday junction branch migration complex subunit RuvA (205 aa).

The tract at residues 1 to 64 is domain I; sequence MIGRLRGVLV…EDAQLLYGFI (64 aa). The segment at 65–143 is domain II; that stretch reads TKQERALFRL…SLMEASAGSE (79 aa). The segment at 144–156 is flexible linker; it reads REFVLQSNYSPAP. The domain III stretch occupies residues 157 to 205; sequence TVNSAEEDAISALISLGYKPPQASKSVSAAYKEGMDSETLIKAALKSML.

Belongs to the RuvA family. Homotetramer. Forms an RuvA(8)-RuvB(12)-Holliday junction (HJ) complex. HJ DNA is sandwiched between 2 RuvA tetramers; dsDNA enters through RuvA and exits via RuvB. An RuvB hexamer assembles on each DNA strand where it exits the tetramer. Each RuvB hexamer is contacted by two RuvA subunits (via domain III) on 2 adjacent RuvB subunits; this complex drives branch migration. In the full resolvosome a probable DNA-RuvA(4)-RuvB(12)-RuvC(2) complex forms which resolves the HJ.

It is found in the cytoplasm. In terms of biological role, the RuvA-RuvB-RuvC complex processes Holliday junction (HJ) DNA during genetic recombination and DNA repair, while the RuvA-RuvB complex plays an important role in the rescue of blocked DNA replication forks via replication fork reversal (RFR). RuvA specifically binds to HJ cruciform DNA, conferring on it an open structure. The RuvB hexamer acts as an ATP-dependent pump, pulling dsDNA into and through the RuvAB complex. HJ branch migration allows RuvC to scan DNA until it finds its consensus sequence, where it cleaves and resolves the cruciform DNA. This is Holliday junction branch migration complex subunit RuvA from Shewanella baltica (strain OS223).